The primary structure comprises 349 residues: Phosphoribosylformylglycinamidine cyclo-ligase (349 aa).

Belongs to the AIR synthase family.

It is found in the cytoplasm. It carries out the reaction 2-formamido-N(1)-(5-O-phospho-beta-D-ribosyl)acetamidine + ATP = 5-amino-1-(5-phospho-beta-D-ribosyl)imidazole + ADP + phosphate + H(+). The protein operates within purine metabolism; IMP biosynthesis via de novo pathway; 5-amino-1-(5-phospho-D-ribosyl)imidazole from N(2)-formyl-N(1)-(5-phospho-D-ribosyl)glycinamide: step 2/2. This is Phosphoribosylformylglycinamidine cyclo-ligase from Trichlorobacter lovleyi (strain ATCC BAA-1151 / DSM 17278 / SZ) (Geobacter lovleyi).